The primary structure comprises 191 residues: MKNQYIDNLILNLKKLPGVGTKQAEKISFFLLKQNENEVEQIINSIVDLKKNIKECQNCNFLQSNNICHFCMDKSRNKQLMIFETTSDALKFEKLGIYRGKYFIIKNLIENVKNANEPKWKDKLLHYASNFEEIIIALNPTIEGQITSNYIKVILEEVALKVTKLAQGLPINSQIDYIDPITLNLSFENRK.

The C4-type zinc-finger motif lies at 56-71 (CQNCNFLQSNNICHFC). Residues 78–170 (KQLMIFETTS…KVTKLAQGLP (93 aa)) enclose the Toprim domain.

The protein belongs to the RecR family.

In terms of biological role, may play a role in DNA repair. It seems to be involved in an RecBC-independent recombinational process of DNA repair. It may act with RecF and RecO. This chain is Recombination protein RecR, found in Mycoplasmopsis pulmonis (strain UAB CTIP) (Mycoplasma pulmonis).